A 61-amino-acid polypeptide reads, in one-letter code: Large ribosomal subunit protein uL30 (61 aa).

This sequence belongs to the universal ribosomal protein uL30 family. In terms of assembly, part of the 50S ribosomal subunit.

This Exiguobacterium sibiricum (strain DSM 17290 / CCUG 55495 / CIP 109462 / JCM 13490 / 255-15) protein is Large ribosomal subunit protein uL30.